The primary structure comprises 428 residues: Adenylosuccinate synthetase (428 aa).

Residues 12 to 18 and 40 to 42 contribute to the GTP site; these read GDEGKGK and GHT. The active-site Proton acceptor is the aspartate 13. Mg(2+)-binding residues include aspartate 13 and glycine 40. Residues 13–16, 38–41, threonine 130, arginine 144, glutamine 225, threonine 240, and arginine 304 each bind IMP; these read DEGK and NAGH. Histidine 41 (proton donor) is an active-site residue. 300 to 306 contacts substrate; that stretch reads VTTGRAR. Residues arginine 306, 332–334, and 414–416 each bind GTP; these read KID and SVG.

This sequence belongs to the adenylosuccinate synthetase family. As to quaternary structure, homodimer. The cofactor is Mg(2+).

It localises to the cytoplasm. It catalyses the reaction IMP + L-aspartate + GTP = N(6)-(1,2-dicarboxyethyl)-AMP + GDP + phosphate + 2 H(+). The protein operates within purine metabolism; AMP biosynthesis via de novo pathway; AMP from IMP: step 1/2. Its function is as follows. Plays an important role in the de novo pathway of purine nucleotide biosynthesis. Catalyzes the first committed step in the biosynthesis of AMP from IMP. In Clostridium botulinum (strain Loch Maree / Type A3), this protein is Adenylosuccinate synthetase.